A 446-amino-acid polypeptide reads, in one-letter code: Probable polyamine aminopropyl transferase (446 aa).

The tract at residues 1–117 is unknown; sequence MVEPAIGRNH…KRIACVVSAV (117 aa). The tract at residues 64–94 is disordered; that stretch reads GRGAERWHRSPRQANGRFSNQRYSSTSPNSS. Over residues 75–94 the composition is skewed to polar residues; it reads RQANGRFSNQRYSSTSPNSS. The region spanning 116 to 351 is the PABS domain; the sequence is AVIFVATSCV…ELFAKKPGSG (236 aa). The interval 118-353 is spermidine synthase; it reads IFVATSCVSP…FAKKPGSGSE (236 aa). S-methyl-5'-thioadenosine is bound by residues asparagine 147, glutamate 226, and 251–252; that span reads DG. The active-site Proton acceptor is aspartate 269.

Belongs to the spermidine/spermine synthase family. As to quaternary structure, homodimer or homotetramer.

The protein resides in the cytoplasm. It carries out the reaction S-adenosyl 3-(methylsulfanyl)propylamine + putrescine = S-methyl-5'-thioadenosine + spermidine + H(+). The protein operates within amine and polyamine biosynthesis; spermidine biosynthesis; spermidine from putrescine: step 1/1. In terms of biological role, catalyzes the irreversible transfer of a propylamine group from the amino donor S-adenosylmethioninamine (decarboxy-AdoMet) to putrescine (1,4-diaminobutane) to yield spermidine. This chain is Probable polyamine aminopropyl transferase (speE), found in Bifidobacterium longum (strain NCC 2705).